A 242-amino-acid chain; its full sequence is Triosephosphate isomerase (242 aa).

A substrate-binding site is contributed by 9-11; the sequence is NWK. His-99 (electrophile) is an active-site residue. The active-site Proton acceptor is Glu-169. Residues Gly-175, Ser-207, and 228–229 each bind substrate; that span reads GG.

Belongs to the triosephosphate isomerase family. Homodimer.

It is found in the cytoplasm. The catalysed reaction is D-glyceraldehyde 3-phosphate = dihydroxyacetone phosphate. The protein operates within carbohydrate biosynthesis; gluconeogenesis. It functions in the pathway carbohydrate degradation; glycolysis; D-glyceraldehyde 3-phosphate from glycerone phosphate: step 1/1. Involved in the gluconeogenesis. Catalyzes stereospecifically the conversion of dihydroxyacetone phosphate (DHAP) to D-glyceraldehyde-3-phosphate (G3P). This is Triosephosphate isomerase from Mycoplasma mobile (strain ATCC 43663 / 163K / NCTC 11711) (Mesomycoplasma mobile).